Consider the following 363-residue polypeptide: MAIKRNQGHGLPPKRDPALGRDALTTSQALPEDQEQSANEDRIRPQRLGDYLGQKDLKEVLGIAIAAAKARREPLDHMLLYGPPGLGKTTMSLILAAEMGVNCKITAAPALERPRDISGLLVGLEAGDILFIDEIHRLNRMAEELLYPAMEDGRLDVTIGKGVSARTRSIPLKPFTLIGATTKVGALTSPLRDRFGLIQRLRFYEVDELIAIVHRSALILEQPITPEGALEIARRARGTPRIANRLLRRIRDYAQVKGYGEISQTVAATALDLYNVDALGLDWTDRLILETMLNHFGGGPVGLEAIAAATGEDSKTIEEVYEPYLLQIGFLNRTPRGRIVSAKARQHLGLIPVEQSTQLDFLP.

The segment at 1-44 is disordered; that stretch reads MAIKRNQGHGLPPKRDPALGRDALTTSQALPEDQEQSANEDRIR. Residues 13–204 are large ATPase domain (RuvB-L); the sequence is PKRDPALGRD…FGLIQRLRFY (192 aa). Residues I43, R44, G85, K88, T89, T90, R194, Y204, and R241 each coordinate ATP. Residue T89 participates in Mg(2+) binding. The interval 205–275 is small ATPAse domain (RuvB-S); the sequence is EVDELIAIVH…VAATALDLYN (71 aa). The head domain (RuvB-H) stretch occupies residues 278 to 363; the sequence is ALGLDWTDRL…EQSTQLDFLP (86 aa). Residues R333 and R338 each coordinate DNA.

The protein belongs to the RuvB family. Homohexamer. Forms an RuvA(8)-RuvB(12)-Holliday junction (HJ) complex. HJ DNA is sandwiched between 2 RuvA tetramers; dsDNA enters through RuvA and exits via RuvB. An RuvB hexamer assembles on each DNA strand where it exits the tetramer. Each RuvB hexamer is contacted by two RuvA subunits (via domain III) on 2 adjacent RuvB subunits; this complex drives branch migration. In the full resolvosome a probable DNA-RuvA(4)-RuvB(12)-RuvC(2) complex forms which resolves the HJ.

It is found in the cytoplasm. The enzyme catalyses ATP + H2O = ADP + phosphate + H(+). Functionally, the RuvA-RuvB-RuvC complex processes Holliday junction (HJ) DNA during genetic recombination and DNA repair, while the RuvA-RuvB complex plays an important role in the rescue of blocked DNA replication forks via replication fork reversal (RFR). RuvA specifically binds to HJ cruciform DNA, conferring on it an open structure. The RuvB hexamer acts as an ATP-dependent pump, pulling dsDNA into and through the RuvAB complex. RuvB forms 2 homohexamers on either side of HJ DNA bound by 1 or 2 RuvA tetramers; 4 subunits per hexamer contact DNA at a time. Coordinated motions by a converter formed by DNA-disengaged RuvB subunits stimulates ATP hydrolysis and nucleotide exchange. Immobilization of the converter enables RuvB to convert the ATP-contained energy into a lever motion, pulling 2 nucleotides of DNA out of the RuvA tetramer per ATP hydrolyzed, thus driving DNA branch migration. The RuvB motors rotate together with the DNA substrate, which together with the progressing nucleotide cycle form the mechanistic basis for DNA recombination by continuous HJ branch migration. Branch migration allows RuvC to scan DNA until it finds its consensus sequence, where it cleaves and resolves cruciform DNA. The polypeptide is Holliday junction branch migration complex subunit RuvB (Picosynechococcus sp. (strain ATCC 27264 / PCC 7002 / PR-6) (Agmenellum quadruplicatum)).